The following is a 258-amino-acid chain: Acyl-[acyl-carrier-protein]--UDP-N-acetylglucosamine O-acyltransferase (258 aa).

It belongs to the transferase hexapeptide repeat family. LpxA subfamily. Homotrimer.

It is found in the cytoplasm. It carries out the reaction a (3R)-hydroxyacyl-[ACP] + UDP-N-acetyl-alpha-D-glucosamine = a UDP-3-O-[(3R)-3-hydroxyacyl]-N-acetyl-alpha-D-glucosamine + holo-[ACP]. The protein operates within glycolipid biosynthesis; lipid IV(A) biosynthesis; lipid IV(A) from (3R)-3-hydroxytetradecanoyl-[acyl-carrier-protein] and UDP-N-acetyl-alpha-D-glucosamine: step 1/6. Involved in the biosynthesis of lipid A, a phosphorylated glycolipid that anchors the lipopolysaccharide to the outer membrane of the cell. In Pseudomonas syringae pv. tomato (strain ATCC BAA-871 / DC3000), this protein is Acyl-[acyl-carrier-protein]--UDP-N-acetylglucosamine O-acyltransferase.